Reading from the N-terminus, the 113-residue chain is Putative pterin-4-alpha-carbinolamine dehydratase (113 aa).

The protein belongs to the pterin-4-alpha-carbinolamine dehydratase family.

The catalysed reaction is (4aS,6R)-4a-hydroxy-L-erythro-5,6,7,8-tetrahydrobiopterin = (6R)-L-erythro-6,7-dihydrobiopterin + H2O. This Nitrosococcus oceani (strain ATCC 19707 / BCRC 17464 / JCM 30415 / NCIMB 11848 / C-107) protein is Putative pterin-4-alpha-carbinolamine dehydratase.